Here is a 368-residue protein sequence, read N- to C-terminus: Putative F-box/kelch-repeat protein At5g02995 (368 aa).

Residues 35 to 84 (SLYWNDPTEDCVWNCLARISRFHYPTLSLVSKGFRSLIASPELEATRSFI) enclose the F-box domain. Kelch repeat units follow at residues 140-186 (DIYI…IVDK) and 187-233 (KIYV…VSGG).

The polypeptide is Putative F-box/kelch-repeat protein At5g02995 (Arabidopsis thaliana (Mouse-ear cress)).